The following is a 207-amino-acid chain: LexA repressor (207 aa).

Positions 28–48 (VREIGEAVGLASSSTVHGHLS) form a DNA-binding region, H-T-H motif. Active-site for autocatalytic cleavage activity residues include S130 and K168.

It belongs to the peptidase S24 family. In terms of assembly, homodimer.

The enzyme catalyses Hydrolysis of Ala-|-Gly bond in repressor LexA.. Functionally, represses a number of genes involved in the response to DNA damage (SOS response), including recA and lexA. In the presence of single-stranded DNA, RecA interacts with LexA causing an autocatalytic cleavage which disrupts the DNA-binding part of LexA, leading to derepression of the SOS regulon and eventually DNA repair. The polypeptide is LexA repressor (Staphylococcus aureus (strain Mu3 / ATCC 700698)).